The following is a 1025-amino-acid chain: MKFFALFIYRPVATILLSVAITLCGILGFRMLPVAPLPQVDFPVIMVSASLPGASPETMASSVATPLERSLGRIAGVSEMTSSSSLGSTRIILQFDFDRDINGAARDVQAAINAAQSLLPSGMPSRPTYRKANPSDAPIMILTLTSDTYSQGELYDFASTQLAPTISQIDGVGDVDVGGSSLPAVRVGLNPQALFNQGVSLDDVRTAVSNANVRKPQGALEDGTHRWQIQTNDELKTAAEYQPLIIHYNNGGAVRLGDVATVTDSVQDVRNAGMTNAKPAILLMIRKLPEANIIQTVDSIRAKLPELQETIPAAIDLQIAQDRSPTIRASLEEVEQTLIISVALVILVVFLFLRSGRATIIPAVSVPVSLIGTFAAMYLCGFSLNNLSLMALTIATGFVVDDAIVVLENIARHLEAGMKPLQAALQGTREVGFTVLSMSLSLVAVFLPLLLMGGLPGRLLREFAVTLSVAIGISLLVSLTLTPMMCGWMLKASKPREQKRLRGFGRMLVALQQGYGKSLKWVLNHTRLVGVVLLGTIALNIWLYISIPKTFFPEQDTGVLMGGIQADQSISFQAMRGKLQDFMKIIRDDPAVDNVTGFTGGSRVNSGMMFITLKPRDERSETAQQIIDRLRVKLAKEPGANLFLMAVQDIRVGGRQSNASYQYTLLSDDLAALREWEPKIRKKLATLPELADVNSDQQDNGAEMNLVYDRDTMARLGIDVQAANSLLNNAFGQRQISTIYQPMNQYKVVMEVDPRYTQDISALEKMFVINNEGKAIPLSYFAKWQPANAPLSVNHQGLSAASTISFNLPTGKSLSDASAAIDRAMTQLGVPSTVRGSFAGTAQVFQETMNSQVILIIAAIATVYIVLGILYESYVHPLTILSTLPSAGVGALLALELFNAPFSLIALIGIMLLIGIVKKNAIMMVDFALEAQRHGNLTPQEAIFQACLLRFRPIMMTTLAALFGALPLVLSGGDGSELRQPLGITIVGGLVMSQLLTLYTTPVVYLFFDRLRLRFSRKPKQTVTE.

12 consecutive transmembrane segments (helical) span residues 3-23, 333-353, 360-380, 387-407, 431-451, 463-483, 528-548, 853-873, 875-895, 897-917, 953-973, and 984-1004; these read FFAL…AITL, EVEQ…FLFL, IIPA…MYLC, LSLM…IVVL, VGFT…PLLL, FAVT…TLTP, LVGV…ISIP, VILI…LYES, VHPL…LLAL, LFNA…IGIV, PIMM…LSGG, and ITIV…TPVV.

This sequence belongs to the resistance-nodulation-cell division (RND) (TC 2.A.6) family. MdtC subfamily. In terms of assembly, part of a tripartite efflux system composed of MdtA, MdtB and MdtC. MdtC forms a heteromultimer with MdtB.

It localises to the cell inner membrane. In terms of biological role, the MdtABC tripartite complex confers resistance against novobiocin and deoxycholate. The chain is Multidrug resistance protein MdtC from Escherichia coli (strain ATCC 8739 / DSM 1576 / NBRC 3972 / NCIMB 8545 / WDCM 00012 / Crooks).